The following is a 34-amino-acid chain: Chlorotoxin-like peptide AaCtx (34 aa).

Intrachain disulfides connect Cys-2–Cys-19, Cys-5–Cys-27, Cys-16–Cys-32, and Cys-20–Cys-34.

It belongs to the short scorpion toxin superfamily. Chloride channel inhibitor family. As to expression, expressed by the venom gland.

It localises to the secreted. Toxin with unknown function in healthy organisms. On glioma cells, interacts with chloride channels (probably ClC-3/CLCN3) and MMP2 at the surface of glioma cells. This complex is then internalized via caveolae, thus inhibiting the chloride channels necessary for cell shrinkage and tumor propagation. Inhibits migration and invasion of U87 glioma cells expressing CLCN3/ClC-3 voltage-gated chloride channels. This chain is Chlorotoxin-like peptide AaCtx, found in Androctonus australis (Sahara scorpion).